The primary structure comprises 542 residues: Phosphoenolpyruvate carboxykinase (ATP) (542 aa).

Positions 67, 208, and 214 each coordinate substrate. ATP-binding positions include Lys-214, His-233, and 249-257 (GLSGTGKTT). Mn(2+) is bound by residues Lys-214 and His-233. Asp-270 is a Mn(2+) binding site. Residues Glu-298, Arg-334, 450-451 (RI), and Thr-456 contribute to the ATP site. Arg-334 serves as a coordination point for substrate.

This sequence belongs to the phosphoenolpyruvate carboxykinase (ATP) family. As to quaternary structure, monomer. It depends on Mn(2+) as a cofactor.

Its subcellular location is the cytoplasm. It catalyses the reaction oxaloacetate + ATP = phosphoenolpyruvate + ADP + CO2. Its pathway is carbohydrate biosynthesis; gluconeogenesis. Its function is as follows. Involved in the gluconeogenesis. Catalyzes the conversion of oxaloacetate (OAA) to phosphoenolpyruvate (PEP) through direct phosphoryl transfer between the nucleoside triphosphate and OAA. The chain is Phosphoenolpyruvate carboxykinase (ATP) from Vibrio vulnificus (strain YJ016).